The following is a 222-amino-acid chain: Ribonuclease HII (222 aa).

The RNase H type-2 domain occupies 32-222 (FHIAGVDEVG…LIKRYKEDIS (191 aa)). The a divalent metal cation site is built by Asp-38, Glu-39, and Asp-130.

Belongs to the RNase HII family. It depends on Mn(2+) as a cofactor. Mg(2+) is required as a cofactor.

The protein resides in the cytoplasm. The catalysed reaction is Endonucleolytic cleavage to 5'-phosphomonoester.. In terms of biological role, endonuclease that specifically degrades the RNA of RNA-DNA hybrids. The protein is Ribonuclease HII of Bartonella bacilliformis (strain ATCC 35685 / KC583 / Herrer 020/F12,63).